The chain runs to 393 residues: S-adenosylmethionine synthase 2 (393 aa).

Residue Glu-9 coordinates Mg(2+). His-15 is an ATP binding site. Glu-43 is a K(+) binding site. Glu-56 and Gln-99 together coordinate L-methionine. ATP-binding positions include 167-169 (DGK), 235-238 (SGRF), Asp-246, 252-253 (RK), Ala-269, Lys-273, and Lys-277. Asp-246 provides a ligand contact to L-methionine. Lys-277 lines the L-methionine pocket.

It belongs to the AdoMet synthase family. In terms of assembly, homotetramer. Interacts with GRF3. The cofactor is Mn(2+). Mg(2+) serves as cofactor. It depends on Co(2+) as a cofactor. Requires K(+) as cofactor. As to expression, highly expressed in stems and roots. Detected in trichomes (at the protein level).

It is found in the cytoplasm. It catalyses the reaction L-methionine + ATP + H2O = S-adenosyl-L-methionine + phosphate + diphosphate. Its pathway is amino-acid biosynthesis; S-adenosyl-L-methionine biosynthesis; S-adenosyl-L-methionine from L-methionine: step 1/1. Its activity is regulated as follows. Inhibited by 5,5'-dithiobis-2-nitrobenzoic acid (DTNB) and N-ethylmaleimide (NEM) (in vitro). In terms of biological role, catalyzes the formation of S-adenosylmethionine from methionine and ATP. The reaction comprises two steps that are both catalyzed by the same enzyme: formation of S-adenosylmethionine (AdoMet) and triphosphate, and subsequent hydrolysis of the triphosphate. This Arabidopsis thaliana (Mouse-ear cress) protein is S-adenosylmethionine synthase 2 (SAM2).